A 539-amino-acid polypeptide reads, in one-letter code: GMP synthase [glutamine-hydrolyzing] (539 aa).

In terms of domain architecture, Glutamine amidotransferase type-1 spans K4 to D202. Residue C81 is the Nucleophile of the active site. Catalysis depends on residues H176 and E178. A GMPS ATP-PPase domain is found at W203–R395. S230–S236 contacts ATP.

Homodimer.

The enzyme catalyses XMP + L-glutamine + ATP + H2O = GMP + L-glutamate + AMP + diphosphate + 2 H(+). It functions in the pathway purine metabolism; GMP biosynthesis; GMP from XMP (L-Gln route): step 1/1. Catalyzes the synthesis of GMP from XMP. This chain is GMP synthase [glutamine-hydrolyzing], found in Burkholderia cenocepacia (strain ATCC BAA-245 / DSM 16553 / LMG 16656 / NCTC 13227 / J2315 / CF5610) (Burkholderia cepacia (strain J2315)).